The sequence spans 473 residues: Cardiolipin synthase C (473 aa).

2 PLD phosphodiesterase domains span residues 125 to 152 (LNRR…GDAY) and 364 to 391 (SGAS…DPRS). Residues histidine 130, lysine 132, aspartate 137, histidine 369, lysine 371, and aspartate 376 contribute to the active site.

The protein belongs to the phospholipase D family. Cardiolipin synthase subfamily. ClsC sub-subfamily.

The enzyme catalyses a 1,2-diacyl-sn-glycero-3-phospho-(1'-sn-glycerol) + a 1,2-diacyl-sn-glycero-3-phosphoethanolamine = a cardiolipin + ethanolamine. With respect to regulation, full activity requires coexpression with the neighboring gene ymdB. In terms of biological role, catalyzes the synthesis of cardiolipin (CL) (diphosphatidylglycerol) from phosphatidylglycerol (PG) and phosphatidylethanolamine (PE). The polypeptide is Cardiolipin synthase C (Escherichia coli (strain K12)).